Consider the following 260-residue polypeptide: Recombination-promoting nuclease RpnD (260 aa).

It belongs to the Rpn/YhgA-like nuclease family.

Functionally, a low activity DNA endonuclease probably yielding 3'-hydroxyl ends. Involved in RecA-independent recombination and horizontal gene transfer. The chain is Recombination-promoting nuclease RpnD (rpnD) from Escherichia coli O157:H7.